The chain runs to 491 residues: Ketol-acid reductoisomerase (NADP(+)) (491 aa).

Positions 17 to 208 (LGKCRFMSRD…GGHRAGVLES (192 aa)) constitute a KARI N-terminal Rossmann domain. NADP(+) contacts are provided by residues 45 to 48 (CGAQ), arginine 68, arginine 76, serine 78, and 108 to 110 (DKQ). The active site involves histidine 132. Residue glycine 158 participates in NADP(+) binding. 2 consecutive KARI C-terminal knotted domains span residues 209–344 (SFVA…NYPE) and 345–484 (YEGK…MTDM). Residues aspartate 217, glutamate 221, glutamate 389, and glutamate 393 each coordinate Mg(2+). Serine 414 serves as a coordination point for substrate.

The protein belongs to the ketol-acid reductoisomerase family. Mg(2+) is required as a cofactor.

The catalysed reaction is (2R)-2,3-dihydroxy-3-methylbutanoate + NADP(+) = (2S)-2-acetolactate + NADPH + H(+). It carries out the reaction (2R,3R)-2,3-dihydroxy-3-methylpentanoate + NADP(+) = (S)-2-ethyl-2-hydroxy-3-oxobutanoate + NADPH + H(+). It functions in the pathway amino-acid biosynthesis; L-isoleucine biosynthesis; L-isoleucine from 2-oxobutanoate: step 2/4. It participates in amino-acid biosynthesis; L-valine biosynthesis; L-valine from pyruvate: step 2/4. Its function is as follows. Involved in the biosynthesis of branched-chain amino acids (BCAA). Catalyzes an alkyl-migration followed by a ketol-acid reduction of (S)-2-acetolactate (S2AL) to yield (R)-2,3-dihydroxy-isovalerate. In the isomerase reaction, S2AL is rearranged via a Mg-dependent methyl migration to produce 3-hydroxy-3-methyl-2-ketobutyrate (HMKB). In the reductase reaction, this 2-ketoacid undergoes a metal-dependent reduction by NADPH to yield (R)-2,3-dihydroxy-isovalerate. The polypeptide is Ketol-acid reductoisomerase (NADP(+)) (Proteus mirabilis (strain HI4320)).